Here is a 124-residue protein sequence, read N- to C-terminus: Kalata-B1 (124 aa).

The first 22 residues, 1 to 22, serve as a signal peptide directing secretion; that stretch reads MAKFTVCLLLCLLLAAFVGAFG. The propeptide occupies 23–88; it reads SELSDSHKTT…QVFLKQLQLK (66 aa). The segment at residues 89–117 is a cross-link (cyclopeptide (Gly-Asn)); sequence GLPVCGETCVGGTCNTPGCTCSWPVCTRN. 3 disulfides stabilise this stretch: Cys-93-Cys-107, Cys-97-Cys-109, and Cys-102-Cys-114. Positions 118 to 124 are excised as a propeptide; the sequence is GLPSLAA.

This sequence belongs to the cyclotide family. Moebius subfamily. In terms of processing, kalata-B1 is a cyclic peptide which occurs in three forms: with unmodified Trp-111, with Trp-111 oxidized to form oxindolylalanine and with Trp-111 oxidized to form N-formylkynurenine. Oxidation is enhanced by exposure to sunlight. Leaves and stems. Lower in roots.

Probably participates in a plant defense mechanism. Has antibiotic activity. Has a diuretic effect. Has a uterotonic effect in humans. Active against the Gram-positive S.aureus with a minimum inhibition concentration of approximately 0.2 microM. Relatively ineffective against Gram-negative bacteria such as E.coli and P.aeruginosa. Inhibitory effect on the growth and development of larvae from H.punctigera. The unmodified form has hemolytic activity, the oxidized form lacks hemolytic activity. If the protein is linearized, hemolytic activity is lost. The chain is Kalata-B1 (OAK1) from Oldenlandia affinis.